Reading from the N-terminus, the 224-residue chain is MKQEKTVSPTVENNRSAESRLSQCDLDECFDESHDRDEEVLGSMTDAVYSLLKGVGEDPEREGLLLTPERVAKSLRFLTKGYRQDPEQLLKKAVFTESYDEMVLVKDIDIYSMCEHHMLPFFGKAHVAYIPDGKIVGLSKIPRVVEVFARRLQVQERLTQQIRDAIQNVLNPRGVAVVIEATHMCMVMRGVEKQNAVTTTSAMSGDFMTSQSTRSEFLRLIGNH.

A disordered region spans residues 1-20 (MKQEKTVSPTVENNRSAESR). Zn(2+) is bound by residues Cys114, His117, and Cys185.

The protein belongs to the GTP cyclohydrolase I family. In terms of assembly, toroid-shaped homodecamer, composed of two pentamers of five dimers.

The catalysed reaction is GTP + H2O = 7,8-dihydroneopterin 3'-triphosphate + formate + H(+). It participates in cofactor biosynthesis; 7,8-dihydroneopterin triphosphate biosynthesis; 7,8-dihydroneopterin triphosphate from GTP: step 1/1. The sequence is that of GTP cyclohydrolase 1 from Chlorobaculum tepidum (strain ATCC 49652 / DSM 12025 / NBRC 103806 / TLS) (Chlorobium tepidum).